Consider the following 163-residue polypeptide: Allophycocyanin alpha-B chain (163 aa).

Asparagine 71 carries the N4-methylasparagine modification. Cysteine 81 is a (2R,3E)-phycocyanobilin binding site.

The protein belongs to the phycobiliprotein family. In terms of assembly, heterodimer of an alpha and a beta chain. In terms of processing, contains one covalently linked bilin chromophore.

The protein resides in the cellular thylakoid membrane. Functionally, light-harvesting photosynthetic bile pigment-protein from the phycobiliprotein complex. Allophycocyanin has a maximum absorption at approximately 650 nanometers. In Synechococcus sp. (strain ATCC 27144 / PCC 6301 / SAUG 1402/1) (Anacystis nidulans), this protein is Allophycocyanin alpha-B chain.